Reading from the N-terminus, the 300-residue chain is 7-methylguanosine phosphate-specific 5'-nucleotidase (300 aa).

Aspartate 41 functions as the Nucleophile in the catalytic mechanism. Residues aspartate 41 and aspartate 43 each contribute to the Mg(2+) site. Aspartate 43 acts as the Proton donor in catalysis. Position 88 (glutamate 88) interacts with CMP. Glutamate 88 serves as a coordination point for N(7)-methyl-GMP. Residues 156-157 (SA) and lysine 205 each bind substrate. Aspartate 230 serves as a coordination point for Mg(2+). Lysine 256 is modified (N6-acetyllysine).

It belongs to the pyrimidine 5'-nucleotidase family. In terms of assembly, monomer.

It localises to the cytoplasm. It catalyses the reaction N(7)-methyl-GMP + H2O = N(7)-methylguanosine + phosphate. The catalysed reaction is CMP + H2O = cytidine + phosphate. It carries out the reaction a ribonucleoside 5'-phosphate + H2O = a ribonucleoside + phosphate. In terms of biological role, specifically hydrolyzes 7-methylguanosine monophosphate (m(7)GMP) to 7-methylguanosine and inorganic phosphate. The specific activity for m(7)GMP may protect cells against undesired salvage of m(7)GMP and its incorporation into nucleic acids. Also has weak activity for CMP. UMP and purine nucleotides are poor substrates. This chain is 7-methylguanosine phosphate-specific 5'-nucleotidase (NT5C3B), found in Homo sapiens (Human).